The primary structure comprises 297 residues: UTP--glucose-1-phosphate uridylyltransferase (297 aa).

Belongs to the UDPGP type 2 family.

It carries out the reaction alpha-D-glucose 1-phosphate + UTP + H(+) = UDP-alpha-D-glucose + diphosphate. It functions in the pathway carbohydrate metabolism; nucleotide-sugar metabolism. Its pathway is bacterial outer membrane biogenesis; lipopolysaccharide biosynthesis. Its function is as follows. May play a role in stationary phase survival. This Salmonella typhimurium (strain LT2 / SGSC1412 / ATCC 700720) protein is UTP--glucose-1-phosphate uridylyltransferase (galF).